The sequence spans 195 residues: N-(5'-phosphoribosyl)anthranilate isomerase (195 aa).

Belongs to the TrpF family.

The enzyme catalyses N-(5-phospho-beta-D-ribosyl)anthranilate = 1-(2-carboxyphenylamino)-1-deoxy-D-ribulose 5-phosphate. The protein operates within amino-acid biosynthesis; L-tryptophan biosynthesis; L-tryptophan from chorismate: step 3/5. The protein is N-(5'-phosphoribosyl)anthranilate isomerase of Methanoregula boonei (strain DSM 21154 / JCM 14090 / 6A8).